The sequence spans 102 residues: Large ribosomal subunit protein bL21 (102 aa).

The protein belongs to the bacterial ribosomal protein bL21 family. As to quaternary structure, part of the 50S ribosomal subunit. Contacts protein L20.

Functionally, this protein binds to 23S rRNA in the presence of protein L20. The polypeptide is Large ribosomal subunit protein bL21 (Lactiplantibacillus plantarum (strain ATCC BAA-793 / NCIMB 8826 / WCFS1) (Lactobacillus plantarum)).